A 302-amino-acid chain; its full sequence is HTH-type transcriptional regulator AlsR (302 aa).

The HTH lysR-type domain maps to 1–58 (MELRHLQYFIAVAEELHFGKAARRLNMTQPPLSQQIKQLEEEVGVTLLKRTKRFVELT). The segment at residues 18-37 (FGKAARRLNMTQPPLSQQIK) is a DNA-binding region (H-T-H motif).

Belongs to the LysR transcriptional regulatory family.

Regulates the expression of the alsSD operon for acetoin biosynthesis. In Bacillus subtilis (strain 168), this protein is HTH-type transcriptional regulator AlsR (alsR).